A 314-amino-acid polypeptide reads, in one-letter code: GTPase Era (314 aa).

The Era-type G domain maps to 7-188; that stretch reads RCGFAAVIGS…REFIAGLMPE (182 aa). Residues 15–22 are G1; that stretch reads GSPNAGKS. 15-22 is a GTP binding site; sequence GSPNAGKS. The G2 stretch occupies residues 41 to 45; the sequence is QTTRF. A G3 region spans residues 62 to 65; the sequence is DTPG. Residues 62-66 and 138-141 each bind GTP; these read DTPGV and NKVD. The G4 stretch occupies residues 138–141; the sequence is NKVD. Positions 167 to 169 are G5; it reads ISA. Residues 219–296 enclose the KH type-2 domain; that stretch reads LHEELPYASM…HLFLNVKVDA (78 aa).

Belongs to the TRAFAC class TrmE-Era-EngA-EngB-Septin-like GTPase superfamily. Era GTPase family. As to quaternary structure, monomer.

Its subcellular location is the cytoplasm. It localises to the cell inner membrane. An essential GTPase that binds both GDP and GTP, with rapid nucleotide exchange. Plays a role in 16S rRNA processing and 30S ribosomal subunit biogenesis and possibly also in cell cycle regulation and energy metabolism. The chain is GTPase Era from Maricaulis maris (strain MCS10) (Caulobacter maris).